We begin with the raw amino-acid sequence, 104 residues long: Large ribosomal subunit protein uL24 (104 aa).

It belongs to the universal ribosomal protein uL24 family. Part of the 50S ribosomal subunit.

Functionally, one of two assembly initiator proteins, it binds directly to the 5'-end of the 23S rRNA, where it nucleates assembly of the 50S subunit. In terms of biological role, one of the proteins that surrounds the polypeptide exit tunnel on the outside of the subunit. This Serratia proteamaculans (strain 568) protein is Large ribosomal subunit protein uL24.